The sequence spans 835 residues: Leucine--tRNA ligase (835 aa).

The 'HIGH' region signature appears at proline 36 to histidine 46. A 'KMSKS' region motif is present at residues lysine 602–serine 606. Lysine 605 serves as a coordination point for ATP.

Belongs to the class-I aminoacyl-tRNA synthetase family.

The protein resides in the cytoplasm. It catalyses the reaction tRNA(Leu) + L-leucine + ATP = L-leucyl-tRNA(Leu) + AMP + diphosphate. This chain is Leucine--tRNA ligase, found in Rickettsia conorii (strain ATCC VR-613 / Malish 7).